The primary structure comprises 147 residues: Large ribosomal subunit protein uL16 (147 aa).

This sequence belongs to the universal ribosomal protein uL16 family. As to quaternary structure, part of the 50S ribosomal subunit.

Functionally, binds 23S rRNA and is also seen to make contacts with the A and possibly P site tRNAs. This Clostridium botulinum (strain ATCC 19397 / Type A) protein is Large ribosomal subunit protein uL16.